Here is a 135-residue protein sequence, read N- to C-terminus: Interleukin-4 (135 aa).

A signal peptide spans 1 to 24; the sequence is MGLTYQLIPVLVCLLVCTSHFAHG. Intrachain disulfides connect C27-C135, C48-C85, and C70-C105. N-linked (GlcNAc...) asparagine glycosylation is present at N62.

Belongs to the IL-4/IL-13 family.

The protein localises to the secreted. Its function is as follows. Participates in at least several B-cell activation processes as well as of other cell types. It is a costimulator of DNA-synthesis. It induces the expression of class II MHC molecules on resting B-cells. It enhances both secretion and cell surface expression of IgE and IgG1. It also regulates the expression of the low affinity Fc receptor for IgE (CD23) on both lymphocytes and monocytes. Positively regulates IL31RA expression in macrophages. Stimulates autophagy in dendritic cells by interfering with mTORC1 signaling and through the induction of RUFY4. This chain is Interleukin-4 (IL4), found in Boselaphus tragocamelus (Nilgai).